The following is a 179-amino-acid chain: Large ribosomal subunit protein uL5 (179 aa).

The protein belongs to the universal ribosomal protein uL5 family. Part of the 50S ribosomal subunit; part of the 5S rRNA/L5/L18/L25 subcomplex. Contacts the 5S rRNA and the P site tRNA. Forms a bridge to the 30S subunit in the 70S ribosome.

This is one of the proteins that bind and probably mediate the attachment of the 5S RNA into the large ribosomal subunit, where it forms part of the central protuberance. In the 70S ribosome it contacts protein S13 of the 30S subunit (bridge B1b), connecting the 2 subunits; this bridge is implicated in subunit movement. Contacts the P site tRNA; the 5S rRNA and some of its associated proteins might help stabilize positioning of ribosome-bound tRNAs. This chain is Large ribosomal subunit protein uL5, found in Erwinia tasmaniensis (strain DSM 17950 / CFBP 7177 / CIP 109463 / NCPPB 4357 / Et1/99).